We begin with the raw amino-acid sequence, 394 residues long: NAD(P)H-quinone oxidoreductase subunit H (394 aa).

This sequence belongs to the complex I 49 kDa subunit family. NDH-1 can be composed of about 15 different subunits; different subcomplexes with different compositions have been identified which probably have different functions.

The protein localises to the cellular thylakoid membrane. The catalysed reaction is a plastoquinone + NADH + (n+1) H(+)(in) = a plastoquinol + NAD(+) + n H(+)(out). It catalyses the reaction a plastoquinone + NADPH + (n+1) H(+)(in) = a plastoquinol + NADP(+) + n H(+)(out). Functionally, NDH-1 shuttles electrons from an unknown electron donor, via FMN and iron-sulfur (Fe-S) centers, to quinones in the respiratory and/or the photosynthetic chain. The immediate electron acceptor for the enzyme in this species is believed to be plastoquinone. Couples the redox reaction to proton translocation, and thus conserves the redox energy in a proton gradient. Cyanobacterial NDH-1 also plays a role in inorganic carbon-concentration. The sequence is that of NAD(P)H-quinone oxidoreductase subunit H from Synechococcus sp. (strain CC9311).